The following is a 207-amino-acid chain: Large ribosomal subunit protein uL4 (207 aa).

The segment at Lys-50–Gly-76 is disordered.

The protein belongs to the universal ribosomal protein uL4 family. As to quaternary structure, part of the 50S ribosomal subunit.

In terms of biological role, one of the primary rRNA binding proteins, this protein initially binds near the 5'-end of the 23S rRNA. It is important during the early stages of 50S assembly. It makes multiple contacts with different domains of the 23S rRNA in the assembled 50S subunit and ribosome. Functionally, forms part of the polypeptide exit tunnel. This Rickettsia canadensis (strain McKiel) protein is Large ribosomal subunit protein uL4.